Here is a 345-residue protein sequence, read N- to C-terminus: NADH-quinone oxidoreductase subunit H (345 aa).

Helical transmembrane passes span 14-34 (IILAQVLAVVAFVMISLLFLV), 84-104 (FILAPMTSFVLAMIAWAVIPF), 115-135 (VAILYVFAVSSLEVYGVIMGG), 161-181 (IGLIIIGVILSTGSMNFGDIV), 187-207 (GWGFFGWYWLPHFPMVFLFFI), 248-268 (YIAIFLMCALTSLLFFGGWLS), 277-297 (VLWMVAKMAFFFFIFAMVKAI), and 309-329 (LGWKVFLPFSLVWVVFVAFAA).

This sequence belongs to the complex I subunit 1 family. As to quaternary structure, NDH-1 is composed of 14 different subunits. Subunits NuoA, H, J, K, L, M, N constitute the membrane sector of the complex.

The protein resides in the cell inner membrane. The catalysed reaction is a quinone + NADH + 5 H(+)(in) = a quinol + NAD(+) + 4 H(+)(out). In terms of biological role, NDH-1 shuttles electrons from NADH, via FMN and iron-sulfur (Fe-S) centers, to quinones in the respiratory chain. The immediate electron acceptor for the enzyme in this species is believed to be ubiquinone. Couples the redox reaction to proton translocation (for every two electrons transferred, four hydrogen ions are translocated across the cytoplasmic membrane), and thus conserves the redox energy in a proton gradient. This subunit may bind ubiquinone. In Ruegeria pomeroyi (strain ATCC 700808 / DSM 15171 / DSS-3) (Silicibacter pomeroyi), this protein is NADH-quinone oxidoreductase subunit H.